The primary structure comprises 401 residues: Nodulation protein E (401 aa).

Residues 2 to 400 (DRRVVITGIG…GTNAVLAFRQ (399 aa)) enclose the Ketosynthase family 3 (KS3) domain. Residues Cys162, His294, and His331 each act as for beta-ketoacyl synthase activity in the active site. A helical transmembrane segment spans residues 329–348 (HAHCLGAASALEMIACVMAI).

The protein belongs to the thiolase-like superfamily. Beta-ketoacyl-ACP synthases family.

It is found in the cell inner membrane. In terms of biological role, proposed to synthesize NOD factor fatty acyl chain. Involved in the synthesis of a highly unsaturated fatty acid moiety, which forms part of a lipo-oligosaccharide that is responsible for host specificity. This is Nodulation protein E (nodE) from Rhizobium leguminosarum bv. trifolii.